A 384-amino-acid polypeptide reads, in one-letter code: Ribosomal RNA large subunit methyltransferase G (384 aa).

This sequence belongs to the methyltransferase superfamily. RlmG family.

It is found in the cytoplasm. It catalyses the reaction guanosine(1835) in 23S rRNA + S-adenosyl-L-methionine = N(2)-methylguanosine(1835) in 23S rRNA + S-adenosyl-L-homocysteine + H(+). In terms of biological role, specifically methylates the guanine in position 1835 (m2G1835) of 23S rRNA. The sequence is that of Ribosomal RNA large subunit methyltransferase G from Streptomyces griseus subsp. griseus (strain JCM 4626 / CBS 651.72 / NBRC 13350 / KCC S-0626 / ISP 5235).